The primary structure comprises 414 residues: Inositol-tetrakisphosphate 1-kinase (414 aa).

Position 18 (K18) interacts with 1D-myo-inositol 1,3,4-trisphosphate. Residues R106 and K157 each coordinate ATP. Residues 117–325 (EAYMEDDRIC…IATVLQGQST (209 aa)) form the ATP-grasp domain. 2 residues coordinate 1D-myo-inositol 1,3,4-trisphosphate: H167 and K199. ATP contacts are provided by residues 188–199 (QNFINHNAVLYK), S214, S232, and S236. Mg(2+) contacts are provided by D281, D295, and N297. N297 is a binding site for 1D-myo-inositol 1,3,4-trisphosphate. N6-acetyllysine; by EP300 and CREBBP is present on residues K340 and K383. A Phosphoserine modification is found at S396. N6-acetyllysine; by EP300 and CREBBP is present on K410.

The protein belongs to the ITPK1 family. In terms of assembly, monomer. Interacts with GPS1/COPS1. Requires Mg(2+) as cofactor. Post-translationally, acetylation by EP300 and CREBBP destabilizes ITPK1, and down-regulates enzymatic activity. Deacetylated by SIRT1. As to expression, expressed in brain &gt; heart &gt; skeletal muscle = kidney = pancreas = liver = placenta &gt; lung. In brain, it is expressed in cerebellum, cerebral cortex, medulla, spinal cord, occipital lobe, frontal lobe, temporal lobe and putamen.

It carries out the reaction 1D-myo-inositol 3,4,5,6-tetrakisphosphate + ATP = 1D-myo-inositol 1,3,4,5,6-pentakisphosphate + ADP + H(+). The enzyme catalyses 1D-myo-inositol 1,3,4-trisphosphate + ATP = 1D-myo-inositol 1,3,4,5-tetrakisphosphate + ADP + H(+). It catalyses the reaction 1D-myo-inositol 1,3,4-trisphosphate + ATP = 1D-myo-inositol 1,3,4,6-tetrakisphosphate + ADP + H(+). The catalysed reaction is 1D-myo-inositol 3,4,6-trisphosphate + ATP = 1D-myo-inositol 1,3,4,6-tetrakisphosphate + ADP + H(+). It carries out the reaction 1D-myo-inositol 1,3,4-trisphosphate + 1D-myo-inositol 1,3,4,5,6-pentakisphosphate = 1D-myo-inositol 3,4,5,6-tetrakisphosphate + 1D-myo-inositol 1,3,4,6-tetrakisphosphate. The enzyme catalyses 1D-myo-inositol 1,3,4-trisphosphate + 1D-myo-inositol 1,3,4,5,6-pentakisphosphate = 1D-myo-inositol 3,4,5,6-tetrakisphosphate + 1D-myo-inositol 1,3,4,5-tetrakisphosphate. Its function is as follows. Kinase that can phosphorylate various inositol polyphosphate such as Ins(3,4,5,6)P4 or Ins(1,3,4)P3. Phosphorylates Ins(3,4,5,6)P4 at position 1 to form Ins(1,3,4,5,6)P5. This reaction is thought to have regulatory importance, since Ins(3,4,5,6)P4 is an inhibitor of plasma membrane Ca(2+)-activated Cl(-) channels, while Ins(1,3,4,5,6)P5 is not. Also phosphorylates Ins(1,3,4)P3 on O-5 and O-6 to form Ins(1,3,4,6)P4, an essential molecule in the hexakisphosphate (InsP6) pathway. Also acts as an inositol polyphosphate phosphatase that dephosphorylates Ins(1,3,4,5)P4 and Ins(1,3,4,6)P4 to Ins(1,3,4)P3, and Ins(1,3,4,5,6)P5 to Ins(3,4,5,6)P4. May also act as an isomerase that interconverts the inositol tetrakisphosphate isomers Ins(1,3,4,5)P4 and Ins(1,3,4,6)P4 in the presence of ADP and magnesium. Probably acts as the rate-limiting enzyme of the InsP6 pathway. Modifies TNF-alpha-induced apoptosis by interfering with the activation of TNFRSF1A-associated death domain. Plays an important role in MLKL-mediated necroptosis. Produces highly phosphorylated inositol phosphates such as inositolhexakisphosphate (InsP6) which bind to MLKL mediating the release of an N-terminal auto-inhibitory region leading to its activation. Essential for activated phospho-MLKL to oligomerize and localize to the cell membrane during necroptosis. The polypeptide is Inositol-tetrakisphosphate 1-kinase (Homo sapiens (Human)).